The chain runs to 324 residues: Endochitinase 1 (324 aa).

Residues 1 to 22 (MSFLQALSIFLLLLLYVVVGSA) form the signal peptide. Residues 23 to 64 (EQCGRQAGGALCPGGLCCSQFGWCGSTADYCTVPGCQSQCSG) form the Chitin-binding type-1 domain. Cystine bridges form between cysteine 25-cysteine 40, cysteine 34-cysteine 46, cysteine 39-cysteine 53, cysteine 58-cysteine 62, cysteine 95-cysteine 158, cysteine 170-cysteine 178, and cysteine 277-cysteine 309. Glutamate 139 (proton donor) is an active-site residue. The propeptide at 318–324 (GVSVDSM) is removed in mature form.

Belongs to the glycosyl hydrolase 19 family. Chitinase class I subfamily.

The enzyme catalyses Random endo-hydrolysis of N-acetyl-beta-D-glucosaminide (1-&gt;4)-beta-linkages in chitin and chitodextrins.. In terms of biological role, defense against chitin-containing fungal pathogens. The chain is Endochitinase 1 from Gossypium hirsutum (Upland cotton).